The sequence spans 396 residues: Flap endonuclease 1 (396 aa).

The segment at 1 to 105 (MGIHGLTKLL…DQLAQRTERR (105 aa)) is N-domain. Asp-34 is a binding site for Mg(2+). Arg-71 is a binding site for DNA. 5 residues coordinate Mg(2+): Asp-87, Glu-159, Glu-161, Asp-180, and Asp-182. An I-domain region spans residues 123–254 (AIEKYSKRSV…VRALQMIKKH (132 aa)). Residue Glu-159 participates in DNA binding. Positions 232 and 234 each coordinate DNA. Position 234 (Asp-234) interacts with Mg(2+). Residues 338 to 346 (NQGRLESFF) form an interaction with PCNA region. A disordered region spans residues 341–396 (RLESFFTSLPKPATADKAKPKEDDKKRKAGAAAGGKDAKGGAAAKKGKFGVGGGKK). A compositionally biased stretch (basic and acidic residues) spans 354–366 (TADKAKPKEDDKK). The span at 370–384 (GAAAGGKDAKGGAAA) shows a compositional bias: low complexity.

It belongs to the XPG/RAD2 endonuclease family. FEN1 subfamily. Interacts with PCNA. Three molecules of FEN1 bind to one PCNA trimer with each molecule binding to one PCNA monomer. PCNA stimulates the nuclease activity without altering cleavage specificity. It depends on Mg(2+) as a cofactor. In terms of processing, phosphorylated. Phosphorylation upon DNA damage induces relocalization to the nuclear plasma.

The protein localises to the nucleus. It localises to the nucleolus. Its subcellular location is the nucleoplasm. The protein resides in the mitochondrion. Functionally, structure-specific nuclease with 5'-flap endonuclease and 5'-3' exonuclease activities involved in DNA replication and repair. During DNA replication, cleaves the 5'-overhanging flap structure that is generated by displacement synthesis when DNA polymerase encounters the 5'-end of a downstream Okazaki fragment. It enters the flap from the 5'-end and then tracks to cleave the flap base, leaving a nick for ligation. Also involved in the long patch base excision repair (LP-BER) pathway, by cleaving within the apurinic/apyrimidinic (AP) site-terminated flap. Acts as a genome stabilization factor that prevents flaps from equilibrating into structures that lead to duplications and deletions. Also possesses 5'-3' exonuclease activity on nicked or gapped double-stranded DNA, and exhibits RNase H activity. Also involved in replication and repair of rDNA and in repairing mitochondrial DNA. The protein is Flap endonuclease 1 of Chlamydomonas reinhardtii (Chlamydomonas smithii).